The primary structure comprises 343 residues: Aspartate carbamoyltransferase catalytic subunit (343 aa).

Residues R91 and T92 each contribute to the carbamoyl phosphate site. K119 contributes to the L-aspartate binding site. Carbamoyl phosphate-binding residues include R141, H171, and Q174. 2 residues coordinate L-aspartate: R204 and R259. Carbamoyl phosphate contacts are provided by G300 and P301.

It belongs to the aspartate/ornithine carbamoyltransferase superfamily. ATCase family. In terms of assembly, heterododecamer (2C3:3R2) of six catalytic PyrB chains organized as two trimers (C3), and six regulatory PyrI chains organized as three dimers (R2).

It carries out the reaction carbamoyl phosphate + L-aspartate = N-carbamoyl-L-aspartate + phosphate + H(+). It participates in pyrimidine metabolism; UMP biosynthesis via de novo pathway; (S)-dihydroorotate from bicarbonate: step 2/3. Its function is as follows. Catalyzes the condensation of carbamoyl phosphate and aspartate to form carbamoyl aspartate and inorganic phosphate, the committed step in the de novo pyrimidine nucleotide biosynthesis pathway. The chain is Aspartate carbamoyltransferase catalytic subunit from Burkholderia multivorans (strain ATCC 17616 / 249).